A 405-amino-acid polypeptide reads, in one-letter code: Acetate kinase (405 aa).

N7 is a binding site for Mg(2+). K14 is an ATP binding site. R92 is a binding site for substrate. D149 acts as the Proton donor/acceptor in catalysis. Residues 209–213 (HLGNG) and 284–286 (DMR) each bind ATP. E389 is a binding site for Mg(2+).

The protein belongs to the acetokinase family. Homodimer. It depends on Mg(2+) as a cofactor. Mn(2+) is required as a cofactor.

The protein localises to the cytoplasm. The catalysed reaction is acetate + ATP = acetyl phosphate + ADP. The protein operates within metabolic intermediate biosynthesis; acetyl-CoA biosynthesis; acetyl-CoA from acetate: step 1/2. Catalyzes the formation of acetyl phosphate from acetate and ATP. Can also catalyze the reverse reaction. This is Acetate kinase from Borreliella burgdorferi (strain ZS7) (Borrelia burgdorferi).